Here is a 160-residue protein sequence, read N- to C-terminus: Oocyte-secreted protein 4B (160 aa).

The signal sequence occupies residues 1-13 (MKTSVLLAITAMC).

Belongs to the PLAC1 family.

It is found in the secreted. This chain is Oocyte-secreted protein 4B, found in Homo sapiens (Human).